The chain runs to 262 residues: Thiazole synthase (262 aa).

K98 acts as the Schiff-base intermediate with DXP in catalysis. Residues G159, 186 to 187 (AG), and 208 to 209 (NT) contribute to the 1-deoxy-D-xylulose 5-phosphate site.

Belongs to the ThiG family. In terms of assembly, homotetramer. Forms heterodimers with either ThiH or ThiS.

Its subcellular location is the cytoplasm. It catalyses the reaction [ThiS sulfur-carrier protein]-C-terminal-Gly-aminoethanethioate + 2-iminoacetate + 1-deoxy-D-xylulose 5-phosphate = [ThiS sulfur-carrier protein]-C-terminal Gly-Gly + 2-[(2R,5Z)-2-carboxy-4-methylthiazol-5(2H)-ylidene]ethyl phosphate + 2 H2O + H(+). It participates in cofactor biosynthesis; thiamine diphosphate biosynthesis. In terms of biological role, catalyzes the rearrangement of 1-deoxy-D-xylulose 5-phosphate (DXP) to produce the thiazole phosphate moiety of thiamine. Sulfur is provided by the thiocarboxylate moiety of the carrier protein ThiS. In vitro, sulfur can be provided by H(2)S. The chain is Thiazole synthase from Hahella chejuensis (strain KCTC 2396).